The following is a 62-amino-acid chain: Sec-independent protein translocase protein TatA (62 aa).

A helical transmembrane segment spans residues 10 to 32 (LLIILIIVIAIFGAGKLAGLGGA).

It belongs to the TatA/E family. As to quaternary structure, forms a complex with TatC.

Its subcellular location is the cell membrane. Its function is as follows. Part of the twin-arginine translocation (Tat) system that transports large folded proteins containing a characteristic twin-arginine motif in their signal peptide across membranes. TatA could form the protein-conducting channel of the Tat system. This Chloroflexus aurantiacus (strain ATCC 29366 / DSM 635 / J-10-fl) protein is Sec-independent protein translocase protein TatA.